Reading from the N-terminus, the 185-residue chain is Endoribonuclease YbeY (185 aa).

Positions 135, 139, and 145 each coordinate Zn(2+).

The protein belongs to the endoribonuclease YbeY family. Requires Zn(2+) as cofactor.

Its subcellular location is the cytoplasm. Its function is as follows. Single strand-specific metallo-endoribonuclease involved in late-stage 70S ribosome quality control and in maturation of the 3' terminus of the 16S rRNA. This chain is Endoribonuclease YbeY, found in Parasynechococcus marenigrum (strain WH8102).